A 293-amino-acid polypeptide reads, in one-letter code: Actin-related protein 2/3 complex subunit 2 (293 aa).

Belongs to the ARPC2 family. Component of the Arp2/3 complex composed of arpB/Arp2, arpC/Arp3, arcA/p41-arc, arcB/p34-arc, arcC/p21-arc, arcD/p20-arc and arcE/p16-arc. Interacts with carmil (via the region between the LRR domain and COOH-terminal proline-rich domain); carmil is required for Arp2/3-dependent actin nucleation. Arp2/3 complex, MyoB, MyoC, and the alpha and beta subunits of capping protein all form a larger complex with carmil.

The protein resides in the cytoplasm. Its subcellular location is the cytoskeleton. It localises to the cell projection. It is found in the cytosol. The protein localises to the cell cortex. The protein resides in the pseudopodium. Functions as a component of the Arp2/3 complex which is involved in regulation of actin polymerization and together with an activating nucleation-promoting factor (NPF) mediates the formation of branched actin networks. Seems to contact the pointed end of the daughter actin filament. The Arp2/3 complex is involved in organizing the actin system in cell motility and chemotaxis, in phagocytosis and macropinocytosis, at late steps of endosome processing, and in mitosis. In concert with a group of other proteins, the Arp2/3 complex plays a general role in the rapid activation and adaptation of the actin system to its multiple functions. This is Actin-related protein 2/3 complex subunit 2 (arcB) from Dictyostelium discoideum (Social amoeba).